A 164-amino-acid polypeptide reads, in one-letter code: Phosphopantetheine adenylyltransferase (164 aa).

S9 lines the substrate pocket. Residues 9-10 (SF) and H17 each bind ATP. Substrate-binding residues include K41, L73, and K87. ATP is bound by residues 88–90 (GLR), E98, and 123–129 (HSFLSSS).

The protein belongs to the bacterial CoaD family. Homohexamer. Requires Mg(2+) as cofactor.

It is found in the cytoplasm. It carries out the reaction (R)-4'-phosphopantetheine + ATP + H(+) = 3'-dephospho-CoA + diphosphate. The protein operates within cofactor biosynthesis; coenzyme A biosynthesis; CoA from (R)-pantothenate: step 4/5. Its function is as follows. Reversibly transfers an adenylyl group from ATP to 4'-phosphopantetheine, yielding dephospho-CoA (dPCoA) and pyrophosphate. The sequence is that of Phosphopantetheine adenylyltransferase from Rubrobacter xylanophilus (strain DSM 9941 / JCM 11954 / NBRC 16129 / PRD-1).